The primary structure comprises 662 residues: Interleukin-12 receptor subunit beta-1 (662 aa).

Positions 1-23 are cleaved as a signal peptide; sequence MEPLVTWVVPLLFLFLLSRQGAA. The Extracellular portion of the chain corresponds to 24–545; the sequence is CRTSECCFQD…RFSIEVQVSD (522 aa). Fibronectin type-III domains lie at 46–136, 142–234, 237–337, 338–444, and 448–542; these read GPRD…LYNS, PLGD…VPPE, PQPQ…IPAD, THTE…GNAS, and TPHH…IEVQ. A disulfide bond links Cys-52 and Cys-62. A glycan (N-linked (GlcNAc...) asparagine) is linked at Asn-121. The short motif at 222-226 is the WSXWS motif element; sequence WSKWS. N-linked (GlcNAc...) asparagine glycans are attached at residues Asn-329, Asn-346, Asn-352, Asn-442, and Asn-456. The chain crosses the membrane as a helical span at residues 546–570; sequence WLIFFASLGSFLSILLVGVLGYLGL. Topologically, residues 571–662 are cytoplasmic; the sequence is NRAARHLCPP…EDGDRCKAKM (92 aa). Positions 577 to 585 match the Box 1 motif motif; sequence LCPPLPTPC. Positions 626–637 are enriched in basic and acidic residues; sequence GERTEPLEKTEL. A disordered region spans residues 626–648; that stretch reads GERTEPLEKTELPEGAPELALDT.

The protein belongs to the type I cytokine receptor family. Type 2 subfamily. Dimer or oligomer; disulfide-linked. Interacts with IL12RB2 to form the high affinity IL12 receptor. Heterodimer with IL23R; in presence of IL23. The heterodimer forms the IL23 receptor.

It is found in the membrane. In terms of biological role, functions as an interleukin receptor which binds interleukin-12 with low affinity and is involved in IL12 transduction. Associated with IL12RB2 it forms a functional, high affinity receptor for IL12. Also associates with IL23R to form the interleukin-23 receptor which functions in IL23 signal transduction probably through activation of the Jak-Stat signaling cascade. This is Interleukin-12 receptor subunit beta-1 (IL12RB1) from Homo sapiens (Human).